We begin with the raw amino-acid sequence, 641 residues long: 1-deoxy-D-xylulose-5-phosphate synthase (641 aa).

Residues H78 and 119-121 (AHS) contribute to the thiamine diphosphate site. Mg(2+) is bound at residue D150. Residues 151 to 152 (GA), N179, Y288, and E370 each bind thiamine diphosphate. Residue N179 participates in Mg(2+) binding.

The protein belongs to the transketolase family. DXPS subfamily. Homodimer. Mg(2+) serves as cofactor. Thiamine diphosphate is required as a cofactor.

The enzyme catalyses D-glyceraldehyde 3-phosphate + pyruvate + H(+) = 1-deoxy-D-xylulose 5-phosphate + CO2. It participates in metabolic intermediate biosynthesis; 1-deoxy-D-xylulose 5-phosphate biosynthesis; 1-deoxy-D-xylulose 5-phosphate from D-glyceraldehyde 3-phosphate and pyruvate: step 1/1. Its function is as follows. Catalyzes the acyloin condensation reaction between C atoms 2 and 3 of pyruvate and glyceraldehyde 3-phosphate to yield 1-deoxy-D-xylulose-5-phosphate (DXP). This is 1-deoxy-D-xylulose-5-phosphate synthase from Azorhizobium caulinodans (strain ATCC 43989 / DSM 5975 / JCM 20966 / LMG 6465 / NBRC 14845 / NCIMB 13405 / ORS 571).